The primary structure comprises 111 residues: UPF0145 protein Bphy_3680 (111 aa).

This sequence belongs to the UPF0145 family.

The protein is UPF0145 protein Bphy_3680 of Paraburkholderia phymatum (strain DSM 17167 / CIP 108236 / LMG 21445 / STM815) (Burkholderia phymatum).